A 222-amino-acid polypeptide reads, in one-letter code: Cytochrome b6 (222 aa).

Residues 39 to 59 (IFYCLGGLTLTCFLIQFATGF) form a helical membrane-spanning segment. Residue tyrosine 41 participates in heme b binding. A heme c-binding site is contributed by cysteine 42. Residues arginine 90, histidine 93, arginine 94, histidine 107, and arginine 110 each coordinate heme b. The next 3 helical transmembrane spans lie at 97–117 (ASMMVLMMILHVFRVYLTGGF), 123–143 (LTWVVGVMLAVTTVTFGVTGY), and 193–213 (LHTFVLPWAIAVLLLLHFLMI). Histidine 194 and histidine 209 together coordinate heme b. Residues arginine 214 and isoleucine 218 each coordinate heme c. Serine 219 is a binding site for heme b.

This sequence belongs to the cytochrome b family. PetB subfamily. In terms of assembly, the 4 large subunits of the cytochrome b6-f complex are cytochrome b6, subunit IV (17 kDa polypeptide, PetD), cytochrome f and the Rieske protein, while the 4 small subunits are PetG, PetL, PetM and PetN. The complex functions as a dimer. It depends on heme b as a cofactor. The cofactor is heme c.

It is found in the cellular thylakoid membrane. Component of the cytochrome b6-f complex, which mediates electron transfer between photosystem II (PSII) and photosystem I (PSI), cyclic electron flow around PSI, and state transitions. This is Cytochrome b6 from Synechocystis sp. (strain ATCC 27184 / PCC 6803 / Kazusa).